The chain runs to 295 residues: Biliverdin reductase A (295 aa).

Positions 1–2 are excised as a propeptide; that stretch reads MS. NAD(+)-binding positions include 18–19, 76–79, and Y97; these read RA and SSSH. S154 carries the phosphoserine modification. S167 serves as a coordination point for NAD(+). The residue at position 173 (T173) is a Phosphothreonine. 2 positions are modified to phosphoserine: S177 and S229. N6-acetyllysine is present on residues K247 and K252. Zn(2+)-binding residues include H279, C280, C291, and H292.

Belongs to the Gfo/Idh/MocA family. Biliverdin reductase subfamily. In terms of assembly, monomer. Zn(2+) serves as cofactor.

The protein localises to the cytoplasm. Its subcellular location is the cytosol. It catalyses the reaction (4Z,15Z)-bilirubin IXalpha + NAD(+) = biliverdin IXalpha + NADH + H(+). The catalysed reaction is (4Z,15Z)-bilirubin IXalpha + NADP(+) = biliverdin IXalpha + NADPH + H(+). It participates in porphyrin-containing compound metabolism; protoheme degradation. Its function is as follows. Reduces the gamma-methene bridge of the open tetrapyrrole, biliverdin IXalpha, to bilirubin with the concomitant oxidation of a NADH or NADPH cofactor. Does not reduce bilirubin IXbeta. Uses the reactants NADH or NADPH depending on the pH; NADH is used at the acidic pH range (6-6.9) and NADPH at the alkaline range (8.5-8.7). NADPH, however, is the probable reactant in biological systems. In Mus musculus (Mouse), this protein is Biliverdin reductase A.